We begin with the raw amino-acid sequence, 162 residues long: Large ribosomal subunit protein uL10 (162 aa).

The protein belongs to the universal ribosomal protein uL10 family. As to quaternary structure, part of the ribosomal stalk of the 50S ribosomal subunit. The N-terminus interacts with L11 and the large rRNA to form the base of the stalk. The C-terminus forms an elongated spine to which L12 dimers bind in a sequential fashion forming a multimeric L10(L12)X complex.

Forms part of the ribosomal stalk, playing a central role in the interaction of the ribosome with GTP-bound translation factors. The polypeptide is Large ribosomal subunit protein uL10 (Phytoplasma mali (strain AT)).